The following is a 413-amino-acid chain: Putative competence-damage inducible protein (413 aa).

The protein belongs to the CinA family.

The chain is Putative competence-damage inducible protein from Thermoanaerobacter sp. (strain X514).